The primary structure comprises 514 residues: ATP synthase subunit alpha (514 aa).

G170–T177 contributes to the ATP binding site.

This sequence belongs to the ATPase alpha/beta chains family. F-type ATPases have 2 components, CF(1) - the catalytic core - and CF(0) - the membrane proton channel. CF(1) has five subunits: alpha(3), beta(3), gamma(1), delta(1), epsilon(1). CF(0) has three main subunits: a(1), b(2) and c(9-12). The alpha and beta chains form an alternating ring which encloses part of the gamma chain. CF(1) is attached to CF(0) by a central stalk formed by the gamma and epsilon chains, while a peripheral stalk is formed by the delta and b chains.

It is found in the cell inner membrane. The enzyme catalyses ATP + H2O + 4 H(+)(in) = ADP + phosphate + 5 H(+)(out). Produces ATP from ADP in the presence of a proton gradient across the membrane. The alpha chain is a regulatory subunit. This chain is ATP synthase subunit alpha, found in Marinobacter nauticus (strain ATCC 700491 / DSM 11845 / VT8) (Marinobacter aquaeolei).